We begin with the raw amino-acid sequence, 612 residues long: Dihydroxy-acid dehydratase (612 aa).

Aspartate 81 contributes to the Mg(2+) binding site. Cysteine 122 provides a ligand contact to [2Fe-2S] cluster. Mg(2+) is bound by residues aspartate 123 and lysine 124. Lysine 124 is subject to N6-carboxylysine. Residue cysteine 193 coordinates [2Fe-2S] cluster. Glutamate 489 is a Mg(2+) binding site. The active-site Proton acceptor is the serine 515.

This sequence belongs to the IlvD/Edd family. Homodimer. It depends on [2Fe-2S] cluster as a cofactor. The cofactor is Mg(2+).

It carries out the reaction (2R)-2,3-dihydroxy-3-methylbutanoate = 3-methyl-2-oxobutanoate + H2O. The catalysed reaction is (2R,3R)-2,3-dihydroxy-3-methylpentanoate = (S)-3-methyl-2-oxopentanoate + H2O. The protein operates within amino-acid biosynthesis; L-isoleucine biosynthesis; L-isoleucine from 2-oxobutanoate: step 3/4. It functions in the pathway amino-acid biosynthesis; L-valine biosynthesis; L-valine from pyruvate: step 3/4. Its function is as follows. Functions in the biosynthesis of branched-chain amino acids. Catalyzes the dehydration of (2R,3R)-2,3-dihydroxy-3-methylpentanoate (2,3-dihydroxy-3-methylvalerate) into 2-oxo-3-methylpentanoate (2-oxo-3-methylvalerate) and of (2R)-2,3-dihydroxy-3-methylbutanoate (2,3-dihydroxyisovalerate) into 2-oxo-3-methylbutanoate (2-oxoisovalerate), the penultimate precursor to L-isoleucine and L-valine, respectively. This Xanthomonas axonopodis pv. citri (strain 306) protein is Dihydroxy-acid dehydratase.